The primary structure comprises 284 residues: RNase adapter protein RapZ (284 aa).

Position 8-15 (8-15 (GRSGSGKS)) interacts with ATP. Position 56–59 (56–59 (DVRN)) interacts with GTP. Residues 266-284 (RSRGKNAQSRHRTLEKSKS) are RNA-binding.

Belongs to the RapZ-like family. RapZ subfamily. As to quaternary structure, homotrimer.

In terms of biological role, modulates the synthesis of GlmS, by affecting the processing and stability of the regulatory small RNA GlmZ. When glucosamine-6-phosphate (GlcN6P) concentrations are high in the cell, RapZ binds GlmZ and targets it to cleavage by RNase E. Consequently, GlmZ is inactivated and unable to activate GlmS synthesis. Under low GlcN6P concentrations, RapZ is sequestered and inactivated by an other regulatory small RNA, GlmY, preventing GlmZ degradation and leading to synthesis of GlmS. The polypeptide is RNase adapter protein RapZ (Sodalis glossinidius (strain morsitans)).